Reading from the N-terminus, the 320-residue chain is Cytochrome c biogenesis protein CcsA (320 aa).

8 helical membrane passes run 15–35 (FSIV…DEII), 43–63 (KGMI…WIYS), 71–91 (LYES…VPYF), 98–118 (LSTI…SGLL), 143–163 (MILS…LLVI), 224–244 (VISL…VWAN), 251–271 (WNWD…AIYL), and 285–305 (AIVA…VNLL).

It belongs to the CcmF/CycK/Ccl1/NrfE/CcsA family. May interact with Ccs1.

It is found in the plastid. The protein localises to the chloroplast thylakoid membrane. Required during biogenesis of c-type cytochromes (cytochrome c6 and cytochrome f) at the step of heme attachment. The sequence is that of Cytochrome c biogenesis protein CcsA from Panax ginseng (Korean ginseng).